Reading from the N-terminus, the 231-residue chain is Fibrillarin-like rRNA/tRNA 2'-O-methyltransferase (231 aa).

S-adenosyl-L-methionine is bound by residues 89 to 90 (TT), 108 to 109 (EF), 133 to 134 (DA), and 153 to 156 (DIAQ).

Belongs to the methyltransferase superfamily. Fibrillarin family. In terms of assembly, interacts with nop5. Component of box C/D small ribonucleoprotein (sRNP) particles that contain rpl7ae, FlpA and nop5, plus a guide RNA.

Functionally, involved in pre-rRNA and tRNA processing. Utilizes the methyl donor S-adenosyl-L-methionine to catalyze the site-specific 2'-hydroxyl methylation of ribose moieties in rRNA and tRNA. Site specificity is provided by a guide RNA that base pairs with the substrate. Methylation occurs at a characteristic distance from the sequence involved in base pairing with the guide RNA. This Sulfolobus acidocaldarius (strain ATCC 33909 / DSM 639 / JCM 8929 / NBRC 15157 / NCIMB 11770) protein is Fibrillarin-like rRNA/tRNA 2'-O-methyltransferase.